Reading from the N-terminus, the 568-residue chain is PTS system lactose-specific EIICB component (568 aa).

A PTS EIIC type-3 domain is found at 7–409; it reads LIEKGKPFFE…VVDTIIYYPF (403 aa). The next 9 membrane-spanning stretches (helical) occupy residues 30–50, 62–82, 103–123, 128–148, 183–203, 222–242, 283–303, 339–359, and 389–409; these read GFIA…IAYV, IETF…FFVG, INFL…AAEP, GFLT…AAFV, FTVS…TLGV, GYLG…VGIH, FIAT…FMWI, IFFV…KFFV, and VLSF…YYPF. The 103-residue stretch at 466 to 568 folds into the PTS EIIB type-3 domain; sequence ETNVLVLCAG…ALAFVQQQFD (103 aa). The active-site Phosphocysteine intermediate; for EIIB activity is Cys-473. Cys-473 bears the Phosphocysteine; by EIIA mark.

Its subcellular location is the cell membrane. It carries out the reaction lactose(out) + N(pros)-phospho-L-histidyl-[protein] = lactose 6-phosphate(in) + L-histidyl-[protein]. Its function is as follows. The phosphoenolpyruvate-dependent sugar phosphotransferase system (sugar PTS), a major carbohydrate active transport system, catalyzes the phosphorylation of incoming sugar substrates concomitantly with their translocation across the cell membrane. The enzyme II LacEF PTS system is involved in lactose transport. The chain is PTS system lactose-specific EIICB component from Lactococcus lactis subsp. lactis (Streptococcus lactis).